The primary structure comprises 203 residues: Thymidylate kinase (203 aa).

14–21 (GGEGIGKS) lines the ATP pocket.

Belongs to the thymidylate kinase family.

It catalyses the reaction dTMP + ATP = dTDP + ADP. Phosphorylation of dTMP to form dTDP in both de novo and salvage pathways of dTTP synthesis. The protein is Thymidylate kinase of Rickettsia rickettsii (strain Iowa).